The sequence spans 539 residues: Aluminum-activated malate transporter 13 (539 aa).

The next 6 membrane-spanning stretches (helical) occupy residues Val-57–Val-77, Asn-80–Leu-100, Gly-107–Ser-127, Ile-130–Met-150, Leu-165–Ile-185, and Leu-192–Ile-212.

This sequence belongs to the aromatic acid exporter (TC 2.A.85) family.

It is found in the membrane. Malate transporter. The protein is Aluminum-activated malate transporter 13 (ALMT13) of Arabidopsis thaliana (Mouse-ear cress).